Reading from the N-terminus, the 117-residue chain is Large ribosomal subunit protein bL20c (117 aa).

The protein belongs to the bacterial ribosomal protein bL20 family.

The protein localises to the plastid. The protein resides in the chloroplast. Its function is as follows. Binds directly to 23S ribosomal RNA and is necessary for the in vitro assembly process of the 50S ribosomal subunit. It is not involved in the protein synthesizing functions of that subunit. The polypeptide is Large ribosomal subunit protein bL20c (Acorus calamus (Sweet flag)).